The following is a 148-amino-acid chain: Oleosin 1 (148 aa).

Ala-2 carries the N-acetylalanine modification. Residues 2–28 (ADQHFQQPLHFQGSYGQQQPRSYQVAK) are polar. The segment at 29 to 148 (AATAVTAGGS…HVPSGQQQSS (120 aa)) is hydrophobic. A run of 2 helical transmembrane segments spans residues 37-57 (GSLLVLSGLVLAGTVIALTIA) and 81-101 (GFLTSGGFGVAAVTVLSWIYK).

This sequence belongs to the oleosin family.

Its subcellular location is the lipid droplet. It localises to the membrane. May have a structural role to stabilize the lipid body during desiccation of the seed by preventing coalescence of the oil. Probably interacts with both lipid and phospholipid moieties of lipid bodies. May also provide recognition signals for specific lipase anchorage in lipolysis during seedling growth. The protein is Oleosin 1 (OLE1) of Prunus dulcis (Almond).